Consider the following 451-residue polypeptide: Target of rapamycin complex 1 subunit tco89 (451 aa).

A disordered region spans residues 1-35 (MERPSLSRRTSSSTVSTDGEGVYSRSTKERKRNFI). The segment covering 7–17 (SRRTSSSTVST) has biased composition (low complexity). Ser-70 carries the phosphoserine modification. Disordered regions lie at residues 122–164 (WDDA…PVTR), 176–264 (INSN…GNSL), and 362–437 (NQNF…DTDY). Over residues 129-162 (NDSTAGNLDSDSALPTPSVTTNEAADSSRASSPV) the composition is skewed to polar residues. Over residues 203 to 215 (DDSAADASTTKSS) the composition is skewed to low complexity. 3 stretches are compositionally biased toward polar residues: residues 228–242 (HSNN…NQPK), 362–376 (NQNF…TSAA), and 407–417 (QSASLNASMSA). Basic residues predominate over residues 419 to 430 (SHARQRSIHVPK).

This sequence belongs to the TORC subunit TCO89 family. The target of rapamycin complex 1 (TORC1) is composed of at least mip1, pop3/wat1, tco89, toc1 and tor2. Post-translationally, either Thr-10, Ser-11, Ser-12, Ser-13 or Thr-14 and Ser-214 or Ser-215 and Ser-247 or Ser-249 are phosphorylated as well.

It is found in the cytoplasm. Functionally, component of TORC1, which regulates multiple cellular processes to control cell growth in response to environmental signals. Tor2 is essential for growth. Nutrient limitation and environmental stress signals cause inactivation of TORC1. Active TORC1 positively controls cell growth and ribosome biogenesis by regulating ribosomal protein gene expression. TORC1 negatively controls G1 cell-cycle arrest, sexual development and amino acid uptake. Represses mating, meiosis and sporulation efficiency by interfering with the functions of the transcription factor ste11 and the meiosis-promoting RNA-binding protein mei2. In Schizosaccharomyces pombe (strain 972 / ATCC 24843) (Fission yeast), this protein is Target of rapamycin complex 1 subunit tco89.